Consider the following 185-residue polypeptide: Ribosome-recycling factor (185 aa).

The protein belongs to the RRF family.

It is found in the cytoplasm. Responsible for the release of ribosomes from messenger RNA at the termination of protein biosynthesis. May increase the efficiency of translation by recycling ribosomes from one round of translation to another. This Shewanella frigidimarina (strain NCIMB 400) protein is Ribosome-recycling factor.